Reading from the N-terminus, the 458-residue chain is tRNA modification GTPase MnmE (458 aa).

(6S)-5-formyl-5,6,7,8-tetrahydrofolate-binding residues include Arg26, Glu88, and Arg127. Positions 224 to 378 constitute a TrmE-type G domain; the sequence is GLSTAIIGRP…IEDRINQLFF (155 aa). Asn234 serves as a coordination point for K(+). Residues 234-239, 253-259, and 278-281 each bind GTP; these read NVGKSS, TDIAGTT, and DTAG. Ser238 contacts Mg(2+). K(+) is bound by residues Thr253, Ile255, and Thr258. Thr259 contacts Mg(2+). Lys458 contributes to the (6S)-5-formyl-5,6,7,8-tetrahydrofolate binding site.

It belongs to the TRAFAC class TrmE-Era-EngA-EngB-Septin-like GTPase superfamily. TrmE GTPase family. Homodimer. Heterotetramer of two MnmE and two MnmG subunits. It depends on K(+) as a cofactor.

Its subcellular location is the cytoplasm. Its function is as follows. Exhibits a very high intrinsic GTPase hydrolysis rate. Involved in the addition of a carboxymethylaminomethyl (cmnm) group at the wobble position (U34) of certain tRNAs, forming tRNA-cmnm(5)s(2)U34. In Streptococcus pyogenes serotype M12 (strain MGAS9429), this protein is tRNA modification GTPase MnmE.